The sequence spans 410 residues: Peptidase T (410 aa).

Histidine 79 contributes to the Zn(2+) binding site. The active site involves aspartate 81. Zn(2+) is bound at residue aspartate 142. Glutamate 176 functions as the Proton acceptor in the catalytic mechanism. Zn(2+)-binding residues include glutamate 177, aspartate 199, and histidine 381.

This sequence belongs to the peptidase M20B family. Requires Zn(2+) as cofactor.

The protein resides in the cytoplasm. It catalyses the reaction Release of the N-terminal residue from a tripeptide.. Its function is as follows. Cleaves the N-terminal amino acid of tripeptides. The sequence is that of Peptidase T from Listeria monocytogenes serotype 4a (strain HCC23).